Consider the following 475-residue polypeptide: Ribonuclease Y (475 aa).

Residues 34 to 73 (EFERESRERRNELQRVERRLMQKEESLDKKSETLEQKDDR) form a disordered region. Positions 165 to 228 (TVTVVQLPND…EVARIALEKL (64 aa)) constitute a KH domain. Residues 291–384 (VLKHAIEVSH…VTAADAISAA (94 aa)) enclose the HD domain.

The protein belongs to the RNase Y family.

Functionally, endoribonuclease that initiates mRNA decay. This Alkaliphilus metalliredigens (strain QYMF) protein is Ribonuclease Y.